A 204-amino-acid chain; its full sequence is uncharacterized protein (204 aa).

2 disordered regions span residues 1–37 (MRAL…GSVS) and 159–204 (GYRP…DGEL). Over residues 28 to 37 (GRGPRAGSVS) the composition is skewed to low complexity. Residues 88–175 (PYRLYVERLD…LPKEKWPAEA (88 aa)) enclose the WGR domain. 2 stretches are compositionally biased toward basic and acidic residues: residues 166–179 (LPKE…EHES) and 188–204 (PEGH…DGEL).

This is an uncharacterized protein from Sinorhizobium fredii (strain NBRC 101917 / NGR234).